An 887-amino-acid polypeptide reads, in one-letter code: Translation initiation factor IF-2 (887 aa).

The interval 1–259 is disordered; it reads MSDEQDQGET…KVGDDRRRGA (259 aa). The segment covering 62 to 94 has biased composition (low complexity); the sequence is GRPSAPSRASGGAAAPRGLTAAEQAARQRAVVE. Composition is skewed to basic and acidic residues over residues 95–111 and 119–158; these read QQRE…EQEK and EEAR…RRAA. Positions 159 to 210 are enriched in low complexity; the sequence is EASQATAAPPAPAAAASPRAAMPAPTAAPARPGAAPARRTAPVPPATSASET. Over residues 250–259 the composition is skewed to basic and acidic residues; it reads KVGDDRRRGA. The region spanning 386 to 556 is the tr-type G domain; the sequence is VRPPVVTIMG…LLQAELLDLK (171 aa). A G1 region spans residues 395 to 402; the sequence is GHVDHGKT. 395–402 contributes to the GTP binding site; sequence GHVDHGKT. Residues 420–424 are G2; sequence GITQH. Positions 442–445 are G3; that stretch reads DTPG. GTP is bound by residues 442 to 446 and 496 to 499; these read DTPGH and NKID. A G4 region spans residues 496-499; sequence NKID. Residues 532–534 are G5; that stretch reads SAL.

This sequence belongs to the TRAFAC class translation factor GTPase superfamily. Classic translation factor GTPase family. IF-2 subfamily.

The protein localises to the cytoplasm. In terms of biological role, one of the essential components for the initiation of protein synthesis. Protects formylmethionyl-tRNA from spontaneous hydrolysis and promotes its binding to the 30S ribosomal subunits. Also involved in the hydrolysis of GTP during the formation of the 70S ribosomal complex. This is Translation initiation factor IF-2 from Acidiphilium cryptum (strain JF-5).